The chain runs to 784 residues: Ribosome biogenesis protein BOP1 homolog (784 aa).

Positions 1–11 (MTKKLALKRKG) are enriched in basic residues. A disordered region spans residues 1-159 (MTKKLALKRK…DSDTSDEEDI (159 aa)). 4 stretches are compositionally biased toward acidic residues: residues 27–36 (SENEEEEEDL), 45–54 (EDSTDDEGID), 62–73 (SEELQFESDEEG), and 84–111 (AEED…EDEE). Residues 112-123 (KDSKSKQADDKP) are compositionally biased toward basic and acidic residues. Residues 124–133 (SSSGAASKKA) show a composition bias toward low complexity. Residues 138 to 148 (LSKRDTSKPEY) are compositionally biased toward basic and acidic residues. Acidic residues predominate over residues 149–158 (QDSDTSDEED). 7 WD repeats span residues 445–486 (GHTD…RTIE), 488–526 (DEVV…KVLV), 570–612 (THFK…SQIP), 615–653 (KSKG…LVKK), 656–695 (TNSK…KPYQ), 699–738 (LHRN…DLLQ), and 754–784 (RDEF…RLYT).

This sequence belongs to the WD repeat BOP1/ERB1 family.

The protein localises to the nucleus. The protein resides in the nucleolus. It localises to the nucleoplasm. Functionally, required for maturation of ribosomal RNAs and formation of the large ribosomal subunit. This Drosophila yakuba (Fruit fly) protein is Ribosome biogenesis protein BOP1 homolog.